A 191-amino-acid chain; its full sequence is Chromobox protein homolog 5 (191 aa).

Residues 1–21 (MGKKTKRTADSSSSEDEEEYV) form a disordered region. A phosphoserine mark is found at serine 11, serine 12, serine 13, and serine 14. The 59-residue stretch at 20–78 (YVVEKVLDRRMVKGQVEYLLKWKGFSEEHNTWEPEKNLDCPELISEFMKKYKKMKEGEN) folds into the Chromo 1 domain. Lysine 32 participates in a covalent cross-link: Glycyl lysine isopeptide (Lys-Gly) (interchain with G-Cter in SUMO2). Position 40 is an N6-acetyllysine (lysine 40). The tract at residues 70 to 117 (YKKMKEGENNKPREKSEGNKRKSSFSNSADDIKSKKKREQSNDIARGF) is disordered. A compositionally biased stretch (basic and acidic residues) spans 73-89 (MKEGENNKPREKSEGNK). Lysine 91 participates in a covalent cross-link: Glycyl lysine isopeptide (Lys-Gly) (interchain with G-Cter in SUMO2). Phosphoserine is present on residues serine 92, serine 93, serine 95, and serine 97. Glycyl lysine isopeptide (Lys-Gly) (interchain with G-Cter in SUMO2) cross-links involve residues lysine 102, lysine 106, lysine 154, and lysine 184. In terms of domain architecture, Chromo 2; shadow subtype spans 121–179 (LEPEKIIGATDSCGDLMFLMKWKDTDEADLVLAKEANVKCPQIVIAFYEERLTWHAYPE).

In terms of assembly, homodimer. Interacts with histone H3 methylated at 'Lys-9'. Interacts (via Chromo 2; shadow subtype domain) with the MIS12 complex subunit NSL1; the interaction is direct, involves dimeric CBX5, and occurs during interphase. Interacts with POGZ; POGZ and PXVXL motif-containing proteins such as INCENP and TRIM28 compete for interaction with CBX5. Interacts with LRIF1 (via PxVxL motif). Interacts with INCENP. Interacts with TRIM24. Interacts (via the chromoshadow domain) with ATRX; the interaction is direct. Interacts (via the chromoshadow domain) with CHAF1A; the interaction is direct. Interacts (via the chromoshadow domain) with LBR; the interaction is direct. Interacts (via the chromoshadow domain) with NIPBL; the interaction is direct. Interacts (via the chromoshadow domain) with SP100; the interaction is direct. Interacts (via the chromoshadow domain) with STAM2; the interaction is direct. Interacts (via the chromoshadow domain) with TRIM28; the interaction is direct. Interacts (via the chromoshadow domain) with CBX3; the interaction is direct. Interacts with PRR14 (via N-terminus). Interacts with RRP1B. Interacts with HNRNPU (via C-terminus); this interaction is, at least in part, RNA-dependent. Interacts with ZNF263; recruited to the SIX3 promoter along with other proteins involved in chromatin modification and transcriptional corepression where it contributes to transcriptional repression. Interacts with AURKB during mitosis. Interacts with CHAMP1. Interacts with BAHD1. Interacts with HP1BP3. Interacts with CHD3. Interacts with CHD4. Interacts with SMYD5. Interacts with KMT5B. Interacts with KMT5C. Phosphorylation of HP1 and LBR may be responsible for some of the alterations in chromatin organization and nuclear structure which occur at various times during the cell cycle. Phosphorylated during interphase and possibly hyper-phosphorylated during mitosis. Post-translationally, ubiquitinated.

The protein resides in the nucleus. It localises to the chromosome. The protein localises to the centromere. Component of heterochromatin that recognizes and binds histone H3 tails methylated at 'Lys-9' (H3K9me), leading to epigenetic repression. In contrast, it is excluded from chromatin when 'Tyr-41' of histone H3 is phosphorylated (H3Y41ph). May contribute to the association of heterochromatin with the inner nuclear membrane by interactions with the lamin-B receptor (LBR). Involved in the formation of kinetochore through interaction with the MIS12 complex subunit NSL1. Required for the formation of the inner centromere. Functionally, component of heterochromatin that recognizes and binds histone H3 tails methylated at 'Lys-9' (H3K9me), leading to epigenetic repression. In contrast, it is excluded from chromatin when 'Tyr-41' of histone H3 is phosphorylated (H3Y41ph). Can interact with lamin-B receptor (LBR). This interaction can contribute to the association of the heterochromatin with the inner nuclear membrane. Involved in the formation of functional kinetochore through interaction with MIS12 complex proteins. This is Chromobox protein homolog 5 (Cbx5) from Mus musculus (Mouse).